The following is a 212-amino-acid chain: Pyridoxine/pyridoxamine 5'-phosphate oxidase (212 aa).

Substrate contacts are provided by residues 8-11 and lysine 66; that span reads RREY. FMN is bound by residues 61–66, 76–77, arginine 82, lysine 83, and glutamine 105; these read RIVLLK and FT. Residues tyrosine 123, arginine 127, and serine 131 each coordinate substrate. FMN is bound by residues 140 to 141 and tryptophan 185; that span reads QS. 191–193 lines the substrate pocket; the sequence is RLH. Arginine 195 contacts FMN.

This sequence belongs to the pyridoxamine 5'-phosphate oxidase family. As to quaternary structure, homodimer. FMN is required as a cofactor.

The enzyme catalyses pyridoxamine 5'-phosphate + O2 + H2O = pyridoxal 5'-phosphate + H2O2 + NH4(+). It catalyses the reaction pyridoxine 5'-phosphate + O2 = pyridoxal 5'-phosphate + H2O2. Its pathway is cofactor metabolism; pyridoxal 5'-phosphate salvage; pyridoxal 5'-phosphate from pyridoxamine 5'-phosphate: step 1/1. It participates in cofactor metabolism; pyridoxal 5'-phosphate salvage; pyridoxal 5'-phosphate from pyridoxine 5'-phosphate: step 1/1. In terms of biological role, catalyzes the oxidation of either pyridoxine 5'-phosphate (PNP) or pyridoxamine 5'-phosphate (PMP) into pyridoxal 5'-phosphate (PLP). This is Pyridoxine/pyridoxamine 5'-phosphate oxidase from Shewanella oneidensis (strain ATCC 700550 / JCM 31522 / CIP 106686 / LMG 19005 / NCIMB 14063 / MR-1).